The sequence spans 319 residues: F-box only protein 8 (319 aa).

Positions 68 to 111 (FINLEMLPPELSFTILSYLNATDLCLASCVWQDLANDELLWQGL) constitute an F-box domain. The 131-residue stretch at 146 to 276 (FNANPEEGVS…LILLSIDLTS (131 aa)) folds into the SEC7 domain.

In terms of tissue distribution, high expression in brain, heart, kidney, liver, lung, skeletal muscle, testis, and day-7 embryos.

In terms of biological role, may promote guanine-nucleotide exchange on an ARF. Promotes the activation of ARF through replacement of GDP with GTP (Potential). The chain is F-box only protein 8 (Fbxo8) from Mus musculus (Mouse).